The primary structure comprises 721 residues: Polyribonucleotide nucleotidyltransferase (721 aa).

Mg(2+) is bound by residues D511 and D517. The region spanning 577-637 (PSTDFFHINP…SGVQAAREHI (61 aa)) is the KH domain. Residues 654 to 721 (GDIHKGIVKK…KGNKISLGIA (68 aa)) form the S1 motif domain.

Belongs to the polyribonucleotide nucleotidyltransferase family. The cofactor is Mg(2+).

The protein localises to the cytoplasm. It catalyses the reaction RNA(n+1) + phosphate = RNA(n) + a ribonucleoside 5'-diphosphate. Involved in mRNA degradation. Catalyzes the phosphorolysis of single-stranded polyribonucleotides processively in the 3'- to 5'-direction. The protein is Polyribonucleotide nucleotidyltransferase of Sulfurimonas denitrificans (strain ATCC 33889 / DSM 1251) (Thiomicrospira denitrificans (strain ATCC 33889 / DSM 1251)).